The chain runs to 441 residues: 4-hydroxybenzoate polyprenyltransferase, mitochondrial (441 aa).

Residues 1–95 constitute a mitochondrion transit peptide; the sequence is MLRKLTSNSS…TLGELVLRDY (95 aa). Transmembrane regions (helical) follow at residues 129 to 149, 154 to 174, 204 to 224, 225 to 245, 246 to 266, 271 to 291, 322 to 342, and 378 to 398; these read IGSW…APAG, LWTL…GCTI, AWFF…ELNW, YSIV…LMKR, ITHW…LLGW, GSVM…WTIV, LWLS…GMVC, and FISN…GTLY. The disordered stretch occupies residues 405-441; it reads AGKSSTTSSSSTSSSSSPSSGLLLAATNHHQPARQAS. Over residues 408-424 the composition is skewed to low complexity; the sequence is SSTTSSSSTSSSSSPSS. Residues 432-441 are compositionally biased toward polar residues; sequence NHHQPARQAS.

The protein belongs to the UbiA prenyltransferase family. Requires Mg(2+) as cofactor.

The protein resides in the mitochondrion inner membrane. The enzyme catalyses an all-trans-polyprenyl diphosphate + 4-hydroxybenzoate = a 4-hydroxy-3-(all-trans-polyprenyl)benzoate + diphosphate. Its pathway is cofactor biosynthesis; ubiquinone biosynthesis. In terms of biological role, catalyzes the prenylation of para-hydroxybenzoate (PHB) with an all-trans polyprenyl group. Mediates the second step in the final reaction sequence of coenzyme Q (CoQ) biosynthesis, which is the condensation of the polyisoprenoid side chain with PHB, generating the first membrane-bound Q intermediate. The chain is 4-hydroxybenzoate polyprenyltransferase, mitochondrial from Aedes aegypti (Yellowfever mosquito).